The primary structure comprises 352 residues: Large ribosomal subunit protein uL5m (352 aa).

Residues 28-109 form a disordered region; that stretch reads STQTGAGAAA…HPIQSPPSSD (82 aa). The segment covering 63 to 80 has biased composition (basic and acidic residues); that stretch reads EEDKKEFRPWKRAADRKA.

The protein belongs to the universal ribosomal protein uL5 family. As to quaternary structure, component of the mitochondrial large ribosomal subunit (mt-LSU). Mature N.crassa 74S mitochondrial ribosomes consist of a small (37S) and a large (54S) subunit. The 37S small subunit contains a 16S ribosomal RNA (16S mt-rRNA) and 32 different proteins. The 54S large subunit contains a 23S rRNA (23S mt-rRNA) and 42 different proteins. Unlike bacterial L5, uL5m does not bind zinc.

Its subcellular location is the mitochondrion. In terms of biological role, component of the mitochondrial ribosome (mitoribosome), a dedicated translation machinery responsible for the synthesis of mitochondrial genome-encoded proteins, including at least some of the essential transmembrane subunits of the mitochondrial respiratory chain. The mitoribosomes are attached to the mitochondrial inner membrane and translation products are cotranslationally integrated into the membrane. This Neurospora crassa (strain ATCC 24698 / 74-OR23-1A / CBS 708.71 / DSM 1257 / FGSC 987) protein is Large ribosomal subunit protein uL5m (mrpl7).